Here is a 2261-residue protein sequence, read N- to C-terminus: Phospholipid-transporting ATPase ABCA1 (2261 aa).

A lipid anchor (S-palmitoyl cysteine) is attached at Cys-3. Asn-14 is a glycosylation site (N-linked (GlcNAc...) asparagine). A helical transmembrane segment spans residues 22–42 (TCQLLLEVAWPLFIFLILISV). Cys-23 carries S-palmitoyl cysteine lipidation. At 43–639 (RLSYPPYEQH…DIFLRVMSRS (597 aa)) the chain is on the extracellular side. The segment at 69–80 (WVQGIICNANNP) is annulus domain 1. A disulfide bond links Cys-75 and Cys-309. 8 N-linked (GlcNAc...) asparagine glycosylation sites follow: Asn-98, Asn-151, Asn-161, Asn-196, Asn-244, Asn-292, Asn-337, and Asn-349. An annulus domain 2 region spans residues 368–379 (SRIIWKALKPLL). 4 N-linked (GlcNAc...) asparagine glycosylation sites follow: Asn-400, Asn-478, Asn-489, and Asn-521. The tract at residues 564–594 (ERTNKIKDGYWDPGPRADPFEDMRYVWGGFA) is gateway domain. Helical transmembrane passes span 640–660 (MPLFMTLAWIYSVAVIIKGIV), 683–703 (FSWFISSLIPLLVSAGLLVVI), 716–736 (SVVFVFLSVFAVVTILQCFLI), 745–765 (LAAACGGIIYFTLYLPYVLCV), and 777–797 (IFASLLSPVAFGFGCEYFALF). The N-linked (GlcNAc...) asparagine glycan is linked to Asn-820. Residues 827–847 (MMLFDTFLYGVMTWYIEAVFP) traverse the membrane as a helical segment. The region spanning 899 to 1131 (VSIQNLVKVY…LGTGYYLTLV (233 aa)) is the ABC transporter 1 domain. ATP is bound at residue 933-940 (GHNGAGKT). The helical transmembrane segment at 1041 to 1057 (LSVALAFVGGSKVVILD) threads the bilayer. The residue at position 1042 (Ser-1042) is a Phosphoserine; by PKA. S-palmitoyl cysteine attachment occurs at residues Cys-1110 and Cys-1111. 2 N-linked (GlcNAc...) asparagine glycosylation sites follow: Asn-1144 and Asn-1294. The tract at residues 1283-1312 (RPFTEDDAADPNDSDIDPESRETDLLSGMD) is disordered. The segment covering 1287–1299 (EDDAADPNDSDID) has biased composition (acidic residues). Ser-1296 carries the phosphoserine modification. Residues 1351–1371 (IVLPAVFVCIALVFSLIVPPF) traverse the membrane as a helical segment. At 1372–1656 (GKYPSLELQP…ALMTTSVDVL (285 aa)) the chain is on the extracellular side. Asn-1453 is a glycosylation site (N-linked (GlcNAc...) asparagine). A disulfide bridge connects residues Cys-1463 and Cys-1477. N-linked (GlcNAc...) asparagine glycosylation is found at Asn-1504 and Asn-1637. Transmembrane regions (helical) follow at residues 1657 to 1677 (VSICVIFAMSFVPASFVVFLI), 1703 to 1723 (FVWDMCNYVVPATLVIIIFIC), 1735 to 1755 (LPVLALLLLLYGWSITPLMYP), 1768 to 1788 (VVLTSVNLFIGINGSVATFVL), 1802 to 1822 (ILKSVFLIFPHFCLGRGLIDM), and 1852 to 1872 (NLFAMAVEGVVFFLITVLIQY). Residues 1912-2144 (LEIKELTKIY…FGDGYTIVVR (233 aa)) form the ABC transporter 2 domain. 1946–1953 (GVNGAGKS) lines the ATP pocket. Residue Asn-2044 is glycosylated (N-linked (GlcNAc...) asparagine). Ser-2054 bears the Phosphoserine; by PKA mark. Asn-2238 carries N-linked (GlcNAc...) asparagine glycosylation.

Belongs to the ABC transporter superfamily. ABCA family. In terms of assembly, interacts with MEGF10. May interact with APOE1; functionally associated with APOE1 in the biogenesis of HDLs. Interacts with ABCA8; this interaction potentiates cholesterol efflux. Interacts with ABCA12 and NR1H2; this interaction is required for ABCA1 localization to the cell surface and is necessary for its normal activity and stability. Post-translationally, phosphorylation on Ser-2054 regulates phospholipid efflux. Palmitoylated by ZDHHC8. Palmitoylation is essential for localization to the plasma membrane. As to expression, widely expressed, but most abundant in macrophages.

The protein resides in the cell membrane. It localises to the endosome. It catalyses the reaction ATP + H2O + phospholipidSide 1 = ADP + phosphate + phospholipidSide 2.. The catalysed reaction is a 1,2-diacyl-sn-glycero-3-phosphocholine(out) + ATP + H2O = a 1,2-diacyl-sn-glycero-3-phosphocholine(in) + ADP + phosphate + H(+). It carries out the reaction a 1,2-diacyl-sn-glycero-3-phospho-L-serine(out) + ATP + H2O = a 1,2-diacyl-sn-glycero-3-phospho-L-serine(in) + ADP + phosphate + H(+). The enzyme catalyses a sphingomyelin(in) + ATP + H2O = a sphingomyelin(out) + ADP + phosphate + H(+). It catalyses the reaction cholesterol(in) + ATP + H2O = cholesterol(out) + ADP + phosphate + H(+). Its activity is regulated as follows. ATPase activity is decreased by cholesterol and ceramide. ATPase activity is stimulated by phosphatidylcholine and to a lesser degree by phosphatidylserine and sphingomyelin. Phospholipid translocase activity is highly reduced by berylium fluoride and aluminum flouride and reduced by N-ethylmaleimide. Catalyzes the translocation of specific phospholipids from the cytoplasmic to the extracellular/lumenal leaflet of membrane coupled to the hydrolysis of ATP. Thereby, participates in phospholipid transfer to apolipoproteins to form nascent high density lipoproteins/HDLs. Transports preferentially phosphatidylcholine over phosphatidylserine. May play a similar role in the efflux of intracellular cholesterol to apolipoproteins and the formation of nascent high density lipoproteins/HDLs. Translocates phospholipids from the outer face of the plasma membrane and forces it through its gateway and annulus into an elongated hydrophobic tunnel in its extracellular domain. This chain is Phospholipid-transporting ATPase ABCA1, found in Homo sapiens (Human).